Reading from the N-terminus, the 274-residue chain is MAIKTYKPTSPGRRAQTCSTFEEITACKPERSLVENLKKSGGRNSNGRITSRNVGGGHKQKYRIIDFRRDKTEIPAKVATIEYDPCRSARIALLNYADGEKRYILAPLSLKVGDTVISSEQADIKPGNALPIRCIPLGTIIHNIELKIGKGAQLARSAGTFAQLMAKEGKYGQVKLPSGEVRMILMDCKATIGQVGNADHENVSIGKAGRSRWLGVRPHVRGVAMNPVDHPHGGGEGRTSGGRHPVTPWGIPTKGYKTRTNKRSTPFIVKKRTK.

Residues 224–259 (AMNPVDHPHGGGEGRTSGGRHPVTPWGIPTKGYKTR) are disordered.

The protein belongs to the universal ribosomal protein uL2 family. In terms of assembly, part of the 50S ribosomal subunit. Forms a bridge to the 30S subunit in the 70S ribosome.

Its function is as follows. One of the primary rRNA binding proteins. Required for association of the 30S and 50S subunits to form the 70S ribosome, for tRNA binding and peptide bond formation. It has been suggested to have peptidyltransferase activity; this is somewhat controversial. Makes several contacts with the 16S rRNA in the 70S ribosome. The chain is Large ribosomal subunit protein uL2 from Citrifermentans bemidjiense (strain ATCC BAA-1014 / DSM 16622 / JCM 12645 / Bem) (Geobacter bemidjiensis).